The primary structure comprises 394 residues: uncharacterized protein (394 aa).

N-linked (GlcNAc...) asparagine glycosylation is found at asparagine 3, asparagine 14, asparagine 20, and asparagine 25. 6 helical membrane passes run 64-84, 101-121, 133-153, 180-200, 228-248, and 256-276; these read AVGI…LVNI, FIWI…YIDV, IFSF…WHVI, IFVV…MGFF, VLLA…SFVY, and WVGM…QFLE. Asparagine 283 and asparagine 286 each carry an N-linked (GlcNAc...) asparagine glycan. A helical membrane pass occupies residues 291-311; that stretch reads AGLVFGLGFCPPLILAYTVCI. N-linked (GlcNAc...) asparagine glycosylation is present at asparagine 344.

Its subcellular location is the membrane. This is an uncharacterized protein from Schizosaccharomyces pombe (strain 972 / ATCC 24843) (Fission yeast).